The sequence spans 340 residues: Glycerol-3-phosphate dehydrogenase [NAD(P)+] (340 aa).

The NADPH site is built by S15, Y16, H36, and K110. Sn-glycerol 3-phosphate contacts are provided by K110, G139, and T141. A143 lines the NADPH pocket. K196, D249, S259, R260, and N261 together coordinate sn-glycerol 3-phosphate. Residue K196 is the Proton acceptor of the active site. Residue R260 participates in NADPH binding. The NADPH site is built by V284 and E286.

It belongs to the NAD-dependent glycerol-3-phosphate dehydrogenase family.

It is found in the cytoplasm. It carries out the reaction sn-glycerol 3-phosphate + NAD(+) = dihydroxyacetone phosphate + NADH + H(+). The catalysed reaction is sn-glycerol 3-phosphate + NADP(+) = dihydroxyacetone phosphate + NADPH + H(+). It functions in the pathway membrane lipid metabolism; glycerophospholipid metabolism. In terms of biological role, catalyzes the reduction of the glycolytic intermediate dihydroxyacetone phosphate (DHAP) to sn-glycerol 3-phosphate (G3P), the key precursor for phospholipid synthesis. This Serratia marcescens protein is Glycerol-3-phosphate dehydrogenase [NAD(P)+].